The chain runs to 419 residues: Probable serine/threonine-protein kinase DDB_G0290859 (419 aa).

Residues Y40–F387 form the Protein kinase domain. ATP is bound by residues I46–V54 and K69. D173 acts as the Proton acceptor in catalysis. Positions E388–N419 constitute an AGC-kinase C-terminal domain.

Belongs to the protein kinase superfamily. AGC Ser/Thr protein kinase family.

It catalyses the reaction L-seryl-[protein] + ATP = O-phospho-L-seryl-[protein] + ADP + H(+). The enzyme catalyses L-threonyl-[protein] + ATP = O-phospho-L-threonyl-[protein] + ADP + H(+). The sequence is that of Probable serine/threonine-protein kinase DDB_G0290859 from Dictyostelium discoideum (Social amoeba).